Here is a 206-residue protein sequence, read N- to C-terminus: Protein GET1 (206 aa).

At Met1 to Leu4 the chain is on the lumenal side. A helical transmembrane segment spans residues Leu5–Ala24. Over Thr25–Arg110 the chain is Cytoplasmic. A coiled-coil region spans residues Ala75–Ser100. The chain crosses the membrane as a helical span at residues Trp111 to Phe131. Residues Thr132–Thr155 are Lumenal-facing. A helical membrane pass occupies residues Val156–Val172. Over Gly173–Gln206 the chain is Cytoplasmic.

Belongs to the WRB/GET1 family. Interacts with GET3.

It is found in the endoplasmic reticulum membrane. Required for the post-translational delivery of tail-anchored (TA) proteins to the endoplasmic reticulum. Acts as a membrane receptor for soluble GET3, which recognizes and selectively binds the transmembrane domain of TA proteins in the cytosol. This Ajellomyces capsulatus (strain NAm1 / WU24) (Darling's disease fungus) protein is Protein GET1.